A 475-amino-acid chain; its full sequence is Splicing factor U2AF 65 kDa subunit (475 aa).

The tract at residues 1 to 90 is disordered; that stretch reads MSDFDEFERQ…RHEKKKKVRK (90 aa). The residue at position 2 (Ser2) is an N-acetylserine. Ser2 carries the phosphoserine modification. Positions 2–93 are required for interaction with PRPF19; it reads SDFDEFERQL…KKKKVRKYWD (92 aa). The segment covering 7–22 has biased composition (basic and acidic residues); sequence FERQLNENKQERDKEN. Lys15 bears the 5-hydroxylysine; by JMJD6; alternate mark. A Glycyl lysine isopeptide (Lys-Gly) (interchain with G-Cter in SUMO2); alternate cross-link involves residue Lys15. The necessary and sufficient to stimulate pre-mRNAs 3'-end cleavage in a CFIm complex-dependent manner stretch occupies residues 17 to 47; sequence ERDKENRHRKRSHSRSRSRDRKRRSRSRDRR. The segment covering 23–46 has biased composition (basic residues); it reads RHRKRSHSRSRSRDRKRRSRSRDR. Residues 47–56 are compositionally biased toward basic and acidic residues; sequence RNRDQRSASR. Residue Lys70 forms a Glycyl lysine isopeptide (Lys-Gly) (interchain with G-Cter in SUMO2); alternate linkage. Lys70 is modified (N6-acetyllysine; alternate). Ser79 is modified (phosphoserine). The span at 79–89 shows a compositional bias: basic residues; it reads SPRHEKKKKVR. 3 consecutive RRM domains span residues 149–231, 259–337, and 385–466; these read RRLY…RPHD, HKLF…RASV, and LPEE…YCDP. Lys276 carries the post-translational modification 5-hydroxylysine; by JMJD6. A Phosphoserine modification is found at Ser294.

This sequence belongs to the splicing factor SR family. As to quaternary structure, interacts with U2AF1L4. Heterodimer with U2AF1. Binds unphosphorylated SF1. Interacts with SCAF11 and SNW1. Interacts with ZRSR2/U2AF1-RS2. Interacts with RBM17. Interacts with PRPF19; the interaction is direct. Interacts with POLR2A (via the C-terminal domain); recruits PRPF19 and the Prp19 complex to the pre-mRNA. Interacts with KHDC4 (Isoform 2). Interacts with ZRSR2. Interacts with the SF3B complex composed of SF3B1, SF3B2, SF3B3, SF3B4, SF3B5, SF3B6 and PHF5A. Interacts (via N-terminus) with CPSF7 (via C-terminus); this interaction stimulates pre-mRNA 3'-end processing by promoting the recruitment of the CFIm complex to cleavage and polyadenylation signals. Interacts with ARGLU1; interaction may be involved in ARGLU1-mediated modulation of alternative splicing. In terms of processing, lysyl-hydroxylation at Lys-15 and Lys-276 affects the mRNA splicing activity of the protein, leading to regulate some, but not all, alternative splicing events.

The protein resides in the nucleus. In terms of biological role, plays a role in pre-mRNA splicing and 3'-end processing. By recruiting PRPF19 and the PRP19C/Prp19 complex/NTC/Nineteen complex to the RNA polymerase II C-terminal domain (CTD), and thereby pre-mRNA, may couple transcription to splicing. Induces cardiac troponin-T (TNNT2) pre-mRNA exon inclusion in muscle. Regulates the TNNT2 exon 5 inclusion through competition with MBNL1. Binds preferentially to a single-stranded structure within the polypyrimidine tract of TNNT2 intron 4 during spliceosome assembly. Required for the export of mRNA out of the nucleus, even if the mRNA is encoded by an intron-less gene. Represses the splicing of MAPT/Tau exon 10. Positively regulates pre-mRNA 3'-end processing by recruiting the CFIm complex to cleavage and polyadenylation signals. This is Splicing factor U2AF 65 kDa subunit (U2AF2) from Homo sapiens (Human).